Reading from the N-terminus, the 353-residue chain is MSEPLKPRIDFAGPLEVEQNQTLKTQQTFSETQAQTFAPAQVDEPLEDEGQAEAVIDAALRPKRSLWRKMVMGGLALFGVSVVGQGVQWTMNAWQTQDWVALGGCAAGALIIGAGVGSVATEWRRLWRLRQRAHERDEARDLLHSHGTGKGRAFCEKLAQQAGIDQSHPALQRWYASIHETQNDREVVSLYAQLVQPVLDAQARREISRSAAESTLMIAVSPLALVDMAFIAWRNLRLINRIATLYGIELGYYSRLRLFRLVLLNIAFAGASELVREVGMDWMSQDLAARLSARAAQGIGAGLLTARLGIKAMELCRPLPWIDDDKPRLGDFRRQLIVQVKETLQKSKTPREN.

3 consecutive transmembrane segments (helical) span residues 70–90 (MVMG…VQWT), 99–119 (WVAL…VGSV), and 213–233 (ESTL…FIAW).

Belongs to the UPF0283 family.

It localises to the cell inner membrane. This is UPF0283 membrane protein CKO_01392 from Citrobacter koseri (strain ATCC BAA-895 / CDC 4225-83 / SGSC4696).